The primary structure comprises 167 residues: Epithelial membrane protein 2 (167 aa).

Residues 1–21 (MLVLLAFIIAFHITSAALLFI) form a helical membrane-spanning segment. N-linked (GlcNAc...) asparagine glycosylation is found at N44, N47, and N52. The next 3 membrane-spanning stretches (helical) occupy residues 67–87 (TMIL…LQLF), 95–115 (FVLT…AASI), and 143–163 (YILA…YLIL).

It belongs to the PMP-22/EMP/MP20 family. In terms of assembly, interacts with PTK2; regulates PTK2 activation and localization. Interacts with ITGB3; regulates the levels of the heterodimer ITGA5-ITGB3 integrin surface expression. Interacts with P2RX7 (via C-terminus). Interacts with ITGB1; the interaction may be direct or indirect and ITGB1 has a heterodimer form.

The protein localises to the golgi apparatus membrane. Its subcellular location is the cell membrane. It is found in the apical cell membrane. It localises to the membrane raft. The protein resides in the cytoplasm. The protein localises to the nucleus. Its subcellular location is the perinuclear region. In terms of biological role, functions as a key regulator of cell membrane composition by regulating protein surface expression. Also, plays a role in regulation of processes including cell migration, cell proliferation, cell contraction and cell adhesion. Regulates transepithelial migration of neutrophils into the alveolar lumen, potentially via mediation of cell surface expression of adhesion markers and lipid raft formation. Negatively regulates caveolae formation by reducing CAV1 expression and CAV1 amount by increasing lysosomal degradation. Facilitates surface trafficking and the formation of lipid rafts bearing GPI-anchor proteins. Regulates surface expression of MHC1 and ICAM1 proteins increasing susceptibility to T-cell mediated cytotoxicity. Regulates the plasma membrane expression of the integrin heterodimers ITGA6-ITGB1, ITGA5-ITGB3 and ITGA5-ITGB1 resulting in modulation of cell-matrix adhesion. Also regulates many processes through PTK2. Regulates blood vessel endothelial cell migration and angiogenesis by regulating VEGF protein expression through PTK2 activation. Regulates cell migration and cell contraction through PTK2 and SRC activation. Regulates focal adhesion density, F-actin conformation and cell adhesion capacity through interaction with PTK2. Positively regulates cell proliferation. Plays a role during cell death and cell blebbing. Promotes angiogenesis and vasculogenesis through induction of VEGFA via a HIF1A-dependent pathway. Also plays a role in embryo implantation by regulating surface trafficking of integrin heterodimer ITGA5-ITGB3. Plays a role in placental angiogenesis and uterine natural killer cell regulation at the maternal-fetal placental interface, however not required in the maternal tissues for a viable pregnancy. Involved in the early stages of embryogenic development and cardiogenesis, potentially via regulation of epithelial-mesenchymal transition timing. May play a role in glomerular filtration. This is Epithelial membrane protein 2 (EMP2) from Pan troglodytes (Chimpanzee).